A 246-amino-acid polypeptide reads, in one-letter code: DNA repair protein RecO (246 aa).

It belongs to the RecO family.

Functionally, involved in DNA repair and RecF pathway recombination. The chain is DNA repair protein RecO from Nitrosococcus oceani (strain ATCC 19707 / BCRC 17464 / JCM 30415 / NCIMB 11848 / C-107).